We begin with the raw amino-acid sequence, 347 residues long: NADH-ubiquinone oxidoreductase chain 2 (347 aa).

Transmembrane regions (helical) follow at residues 1 to 21 (MNPLIFSTILATIIMGTAIVM), 25 to 45 (HWLTIWIGFEMNMLAIIPMLM), 59 to 79 (YFLTQATASMLLMLAVIMNLT), 96 to 116 (IIMTIALTMKLGLSPFHFWVP), 127 to 147 (CLILLTWQKLAPLSILYMISP), 149 to 169 (INLNLLLSMSLISVAIGGWGG), 178 to 198 (IMAYSSIAHMGWMTAILAYNP), 200 to 220 (MTMLNLLVYITMTTTMFMLLI), 247 to 267 (IMLSLGGLPPLTGFLPKWMII), 276 to 296 (IIMPTLMAIMALLSLYFYMRL), and 325 to 345 (LLSPLIVMSTLTLPLAPMMSL).

The protein belongs to the complex I subunit 2 family. Core subunit of respiratory chain NADH dehydrogenase (Complex I) which is composed of 45 different subunits. Interacts with TMEM242.

The protein resides in the mitochondrion inner membrane. The catalysed reaction is a ubiquinone + NADH + 5 H(+)(in) = a ubiquinol + NAD(+) + 4 H(+)(out). Functionally, core subunit of the mitochondrial membrane respiratory chain NADH dehydrogenase (Complex I) which catalyzes electron transfer from NADH through the respiratory chain, using ubiquinone as an electron acceptor. Essential for the catalytic activity and assembly of complex I. This chain is NADH-ubiquinone oxidoreductase chain 2, found in Natalus stramineus (Mexican funnel-eared bat).